The chain runs to 205 residues: Small ribosomal subunit protein uS4 (205 aa).

Residues 1-46 form a disordered region; it reads MSKRHSAKYKIDRRMGENLWGRPKSPVNSRSYGPGQHGQRRKSKVS. The region spanning 94 to 154 is the S4 RNA-binding domain; that stretch reads SRLDAIVYRA…EKSRNMALVL (61 aa).

Belongs to the universal ribosomal protein uS4 family. Part of the 30S ribosomal subunit. Contacts protein S5. The interaction surface between S4 and S5 is involved in control of translational fidelity.

One of the primary rRNA binding proteins, it binds directly to 16S rRNA where it nucleates assembly of the body of the 30S subunit. In terms of biological role, with S5 and S12 plays an important role in translational accuracy. This chain is Small ribosomal subunit protein uS4, found in Caulobacter vibrioides (strain ATCC 19089 / CIP 103742 / CB 15) (Caulobacter crescentus).